The following is a 24-amino-acid chain: Brevinin-1HSa (24 aa).

A disulfide bond links Cys-18 and Cys-24.

In terms of tissue distribution, expressed by the skin glands.

Its subcellular location is the secreted. Its function is as follows. Has antibacterial activity against the Gram-positive bacterium S.aureus ATCC 25923 (MIC=3 uM) and the Gram-negative bacterium E.coli ATCC 25726 (MIC=24 uM). This Odorrana hosii (Hose's rock frog) protein is Brevinin-1HSa.